We begin with the raw amino-acid sequence, 1201 residues long: MKMNRHFTVPQNGESSTIQWTKRNSKITNPDGSKVFEANDILVPEDWSQVAVDILAQKYFRRKGVPKYLKKVQEDGIPEWLQKSIPDTEKLESLKPEDRFGGETSALEVFHRLAGCWTYWGYKYKYFSDEESAKIFYDEIVYMLATQMAAPNSPQWFNTGLNWAYGIDGKSQGHYYVDPSTGKLVKSTSAYEHPQPHACFIQSVDDDLVNEGGIMDLWVREARLFKYGSGTGTNFSNLRGENEPLSGGGKSSGLMSFLKIGDRAAGAIKSGGTTRRAAKMVCLDVDHPDIENFIDWKVTEEKKVASLVTGSMLNNRHLNAIMSACYEMEGEDRFNPKKNSSLKKTIQDAKKVLIPDNYIKRVIDLARQGYKEILFEELTTDWQSDAYNTVSGQNSNNSIRLTNEFMAAVEQDQPWNLYFRTEKEKAKVEGRKAKPSQTLRARELWEKISYAAWASADPGTQYHTTINEWHTCPEDGPINASNPCSEYMFLDNTACNLASANLQKFVNLETLNFDVEGFRYLCKLWTIILEISVTMAQFPSKEIAELSYKFRTLGLGYANLGSVLMVLGIPYDSQQAMAITGAISSIMHMTAYATSAEMAKEQGPFVGYAKNQKHMLRVIRNHRRAAYNAPSGDYEGLTITPIGINPAFCPSYMLKAAQEDADLALSLGEKYGFRNAQVTVIAPTGTIGLVMDCDTTGIEPDFTLVKFKKLAGGGYFKIINQSVPYGLKKLGYSPSEIEAIVNYCKGHATLNGAPVINTQALKEKGFTNEILEKVEASLPLAFDINFAFNKFNLGENFLTKNLGISKEIFDSPGFSLLEHLGFTKEDINKANDYVCGTMTIENAPFLKEKDYPVFDCANKCGKYGKRFLSYESHIRIMAAAQPFISGAISKTINLPEEAVIEDIKNAYFLSWKMMIKANALYRDGSKLSQPLNSVLELLNGIEIDDQEEIREATISKDPVQIAEKIVTKYISHRRKLPSRRAGYTQKAIVGGHKVYLRTGEYEDGQIGEIFIDMHKEGAAFRSLMNAFAISVSLGLQHGVPLEEYVDAFTFFKFEPNGIVSGNKHIKMSTSVIDYIFRELAITYLGRYDLGQVAPEDLRGDEIGSKRATAESNGQEKETLSSMTAVIEPTPKKEVETISYSQMISKEKPSSSPSGISLLEEVKLAKIKGYTGDSCSECGSFEMVRNGSCLKCMSCGSTTGCS.

Residues Ser153, 198–199 (AC), Gly230, 482–486 (NPCSE), and 683–687 (PTGTI) contribute to the substrate site. Cys199 and Cys495 are joined by a disulfide. Asn482 (proton acceptor) is an active-site residue. Cys484 serves as the catalytic Cysteine radical intermediate. Residue Glu486 is the Proton acceptor of the active site. The segment covering 1100–1118 (DEIGSKRATAESNGQEKET) has biased composition (basic and acidic residues). The segment at 1100 to 1120 (DEIGSKRATAESNGQEKETLS) is disordered.

It belongs to the ribonucleoside diphosphate reductase class-2 family. It depends on adenosylcob(III)alamin as a cofactor.

The enzyme catalyses a 2'-deoxyribonucleoside 5'-diphosphate + [thioredoxin]-disulfide + H2O = a ribonucleoside 5'-diphosphate + [thioredoxin]-dithiol. In terms of biological role, catalyzes the reduction of ribonucleotides to deoxyribonucleotides. May function to provide a pool of deoxyribonucleotide precursors for DNA repair during oxygen limitation and/or for immediate growth after restoration of oxygen. The protein is Vitamin B12-dependent ribonucleotide reductase (nrdJ) of Leptospira interrogans serogroup Icterohaemorrhagiae serovar Lai (strain 56601).